Here is a 156-residue protein sequence, read N- to C-terminus: Small ribosomal subunit protein uS7 (156 aa).

It belongs to the universal ribosomal protein uS7 family. As to quaternary structure, part of the 30S ribosomal subunit. Contacts proteins S9 and S11.

One of the primary rRNA binding proteins, it binds directly to 16S rRNA where it nucleates assembly of the head domain of the 30S subunit. Is located at the subunit interface close to the decoding center, probably blocks exit of the E-site tRNA. The chain is Small ribosomal subunit protein uS7 from Novosphingobium aromaticivorans (strain ATCC 700278 / DSM 12444 / CCUG 56034 / CIP 105152 / NBRC 16084 / F199).